We begin with the raw amino-acid sequence, 375 residues long: ATP phosphoribosyltransferase regulatory subunit (375 aa).

It belongs to the class-II aminoacyl-tRNA synthetase family. HisZ subfamily. Heteromultimer composed of HisG and HisZ subunits.

The protein resides in the cytoplasm. Its pathway is amino-acid biosynthesis; L-histidine biosynthesis; L-histidine from 5-phospho-alpha-D-ribose 1-diphosphate: step 1/9. Functionally, required for the first step of histidine biosynthesis. May allow the feedback regulation of ATP phosphoribosyltransferase activity by histidine. In Agrobacterium fabrum (strain C58 / ATCC 33970) (Agrobacterium tumefaciens (strain C58)), this protein is ATP phosphoribosyltransferase regulatory subunit.